Here is a 202-residue protein sequence, read N- to C-terminus: IMP cyclohydrolase (202 aa).

Belongs to the archaeal IMP cyclohydrolase family.

It catalyses the reaction IMP + H2O = 5-formamido-1-(5-phospho-D-ribosyl)imidazole-4-carboxamide. The protein operates within purine metabolism; IMP biosynthesis via de novo pathway; IMP from 5-formamido-1-(5-phospho-D-ribosyl)imidazole-4-carboxamide: step 1/1. In terms of biological role, catalyzes the cyclization of 5-formylamidoimidazole-4-carboxamide ribonucleotide to IMP. This is IMP cyclohydrolase from Methanosphaera stadtmanae (strain ATCC 43021 / DSM 3091 / JCM 11832 / MCB-3).